Here is a 341-residue protein sequence, read N- to C-terminus: tRNA (guanine-N(7)-)-methyltransferase (341 aa).

Positions 75, 100, 127, and 150 each coordinate S-adenosyl-L-methionine. Residue Asp150 is part of the active site. Residue Lys154 coordinates substrate. Positions 156-161 are interaction with RNA; sequence RHNKRR. Asp186 serves as a coordination point for substrate.

The protein belongs to the class I-like SAM-binding methyltransferase superfamily. TrmB family.

The catalysed reaction is guanosine(46) in tRNA + S-adenosyl-L-methionine = N(7)-methylguanosine(46) in tRNA + S-adenosyl-L-homocysteine. It participates in tRNA modification; N(7)-methylguanine-tRNA biosynthesis. Its function is as follows. Catalyzes the formation of N(7)-methylguanine at position 46 (m7G46) in tRNA. This Xanthomonas euvesicatoria pv. vesicatoria (strain 85-10) (Xanthomonas campestris pv. vesicatoria) protein is tRNA (guanine-N(7)-)-methyltransferase.